The sequence spans 818 residues: Sodium/hydrogen exchanger 1 (818 aa).

The Extracellular segment spans residues 1–98 (MLLWSGICGL…FPVLGIDYTH (98 aa)). A disordered region spans residues 39–76 (PSPTASTIRGSEPPRERSIGDVTTAPPELAPESRPVNH). Asparagine 75 is a glycosylation site (N-linked (GlcNAc...) asparagine). A helical transmembrane segment spans residues 99 to 121 (VRTPFEISLWILLACLMKIGFHV). At 122–130 (IPTISSIVP) the chain is on the cytoplasmic side. A helical membrane pass occupies residues 131–148 (ESCLLIVVGLLVGGLIKA). Residues 149-158 (VGETPPFLQS) lie on the Extracellular side of the membrane. Residues 159–176 (EVFFLFLLPPIILDAGYF) traverse the membrane as a helical segment. Residues 177–186 (LPLRQFTENL) lie on the Cytoplasmic side of the membrane. The helical transmembrane segment at 187-215 (GTILIFAVVGTLWNAFFLGGLMYAVCLVG) threads the bilayer. The Extracellular portion of the chain corresponds to 216–222 (GEQINNI). The helical transmembrane segment at 223-249 (GLLDNLLFGSIISAVDPVAVLAVFEEI) threads the bilayer. Over 250–252 (HIN) the chain is Cytoplasmic. Residues 253 to 283 (ELLHILVFGESLLNDAVTVVLYHLFEEFANY) traverse the membrane as a helical segment. Residues 284-287 (DRVG) lie on the Extracellular side of the membrane. The helical transmembrane segment at 288 to 322 (IVDIVLGFLSFFVVSLGGVFVGVVYGVIAAFTSRF) threads the bilayer. The Cytoplasmic portion of the chain corresponds to 323 to 328 (TSHIRV). A helical transmembrane segment spans residues 329–341 (IEPLFVFLYSYMA). The Extracellular portion of the chain corresponds to 342–350 (YLSAELFHL). Residues 351–371 (SGIMALIASGVVMRPYVEANI) traverse the membrane as a helical segment. The Cytoplasmic segment spans residues 372–373 (SH). A helical transmembrane segment spans residues 374 to 404 (KSHTTIKYFLKMWSSVSETLIFIFLGVSTVA). At 405-410 (GSHHWN) the chain is on the extracellular side. Residues 411 to 438 (WTFVISTLLFCLIARVLGVLGLTWFINK) form a helical membrane-spanning segment. Residues 439-444 (FRIVKL) lie on the Cytoplasmic side of the membrane. A helical membrane pass occupies residues 445–469 (TPKDQFIIAYGGLRGAIAFSLGHLL). Topologically, residues 470–475 (DKNHFP) are extracellular. A helical transmembrane segment spans residues 476–505 (MCDLFLTAIITVIFFTVFVQGMTIRPLVDL). Residues 503–545 (VDLLAVKKKQETKRSINEEIHTQFLDHLLTGIEDICGHYGHHH) form an interaction with TESC region. Residues 506–818 (LAVKKKQETK…EGEPFIPKGQ (313 aa)) are Cytoplasmic-facing. The interval 509–516 (KKKQETKR) is PI(4,5)P2-binding region. The interaction with CHP2 stretch occupies residues 515-545 (KRSINEEIHTQFLDHLLTGIEDICGHYGHHH). A confers pH-dependent PI(4,5)P2 binding region spans residues 540–545 (HYGHHH). The segment at 552–560 (RFNKKYVKK) is PI(4,5)P2-binding region. 2 positions are modified to phosphoserine: serine 599 and serine 602. At threonine 603 the chain carries Phosphothreonine. Residues serine 605 and serine 648 each carry the phosphoserine modification. The interval 633–818 (KILRNNLQKT…EGEPFIPKGQ (186 aa)) is interaction with TESC. The segment at 633–818 (KILRNNLQKT…EGEPFIPKGQ (186 aa)) is interaction with CALM1. Residues 684–687 (LTVP) are interaction with PPP3CA. Phosphoserine is present on residues serine 693, serine 697, and serine 703. An interaction with PPP3CA region spans residues 715–720 (PVITID). A phosphoserine mark is found at serine 723, serine 726, and serine 729. The tract at residues 739–818 (GKVLGLSREP…EGEPFIPKGQ (80 aa)) is disordered. 2 positions are modified to phosphothreonine: threonine 752 and threonine 782. Residues 785-794 (PSDSPSSQRI) show a composition bias toward polar residues. 3 positions are modified to phosphoserine: serine 788, serine 790, and serine 799.

The protein belongs to the monovalent cation:proton antiporter 1 (CPA1) transporter (TC 2.A.36) family. As to quaternary structure, homodimer; dimerization is crucial for its function. Oligomer. Interacts with CALM in a calcium-dependent manner. Interacts with TESC. Interacts (via the juxtamembrane region of the cytoplasmic C-terminal domain) with CHP1; the interaction occurs at the plasma membrane in a calcium-dependent manner. Interacts with CHP2; the interaction occurs in a calcium-dependent manner. Interacts with EZR; regulates the cytoskeletal interactions of SLC9A1 and promotes stress fiber formation. Post-translationally, ubiquitinated, leading to its degradation by the proteasome. Ubiquitination is reduced by CHP1. O-glycosylated. In terms of processing, palmitoylated; may play a major role in SLC9A1 regulation. Post-translationally, phosphorylation at Thr-782 increases SLC9A1 activity. Specifically dephosphorylated at Thr-782 by PPP3CA that negatively regulates SLC9A1 activity. Phosphorylation at Ser-648 by AKT1 reduces SLC9A1 binding to CALM1.

The protein localises to the cell membrane. Its subcellular location is the basolateral cell membrane. The catalysed reaction is Na(+)(in) + H(+)(out) = Na(+)(out) + H(+)(in). It catalyses the reaction Li(+)(out) + H(+)(in) = Li(+)(in) + H(+)(out). The enzyme catalyses Li(+)(in) + Na(+)(out) = Li(+)(out) + Na(+)(in). Activated at acidic pHs. Inhibited by cariporide and eniporide. Inhibited by amiloride and 5-amino-substituted derivatives. Phosphatidylinositol 4,5-bisphosphate (PI(4,5)P2) and phosphatidylinositol 3,4,5-trisphosphate (PI(3,4,5)P3) bind and differentially regulate SLC9A1 activity. In terms of biological role, electroneutral Na(+) /H(+) antiporter that extrudes Na(+) in exchange for external protons driven by the inward sodium ion chemical gradient, protecting cells from acidification that occurs from metabolism. Exchanges intracellular H(+) ions for extracellular Na(+) in 1:1 stoichiometry. Plays a key role in maintening intracellular pH neutral and cell volume, and thus is important for cell growth, proliferation, migration and survival. In addition, can transport lithium Li(+) and also functions as a Na(+)/Li(+) antiporter. SLC9A1 also functions in membrane anchoring and organization of scaffolding complexes that coordinate signaling inputs. The chain is Sodium/hydrogen exchanger 1 (SLC9A1) from Sus scrofa (Pig).